The primary structure comprises 729 residues: Fatty acid oxidation complex subunit alpha (729 aa).

The enoyl-CoA hydratase/isomerase stretch occupies residues 1–189 (MLYKGDTLYL…KIGLVDGVVK (189 aa)). Aspartate 296 provides a ligand contact to substrate. Positions 311–729 (ETPKQAAVLG…ARPVGDLKTA (419 aa)) are 3-hydroxyacyl-CoA dehydrogenase. NAD(+) is bound by residues methionine 324, aspartate 343, 400–402 (VVE), lysine 407, and serine 429. The For 3-hydroxyacyl-CoA dehydrogenase activity role is filled by histidine 450. Position 453 (asparagine 453) interacts with NAD(+). Substrate-binding residues include asparagine 500 and tyrosine 660. The disordered stretch occupies residues 708-729 (RHNEPYYPPVEPARPVGDLKTA).

This sequence in the N-terminal section; belongs to the enoyl-CoA hydratase/isomerase family. The protein in the C-terminal section; belongs to the 3-hydroxyacyl-CoA dehydrogenase family. In terms of assembly, heterotetramer of two alpha chains (FadB) and two beta chains (FadA).

The enzyme catalyses a (3S)-3-hydroxyacyl-CoA + NAD(+) = a 3-oxoacyl-CoA + NADH + H(+). It catalyses the reaction a (3S)-3-hydroxyacyl-CoA = a (2E)-enoyl-CoA + H2O. It carries out the reaction a 4-saturated-(3S)-3-hydroxyacyl-CoA = a (3E)-enoyl-CoA + H2O. The catalysed reaction is (3S)-3-hydroxybutanoyl-CoA = (3R)-3-hydroxybutanoyl-CoA. The enzyme catalyses a (3Z)-enoyl-CoA = a 4-saturated (2E)-enoyl-CoA. It catalyses the reaction a (3E)-enoyl-CoA = a 4-saturated (2E)-enoyl-CoA. The protein operates within lipid metabolism; fatty acid beta-oxidation. Involved in the aerobic and anaerobic degradation of long-chain fatty acids via beta-oxidation cycle. Catalyzes the formation of 3-oxoacyl-CoA from enoyl-CoA via L-3-hydroxyacyl-CoA. It can also use D-3-hydroxyacyl-CoA and cis-3-enoyl-CoA as substrate. This is Fatty acid oxidation complex subunit alpha from Escherichia coli (strain UTI89 / UPEC).